The primary structure comprises 275 residues: Phosphatidylglycerol--prolipoprotein diacylglyceryl transferase (275 aa).

3 helical membrane-spanning segments follow: residues Ile-18–Ala-38, Ile-55–Gln-75, and Ile-89–Ile-109. Arg-137 provides a ligand contact to a 1,2-diacyl-sn-glycero-3-phospho-(1'-sn-glycerol). 2 helical membrane passes run Ile-203 to Gly-223 and Ile-235 to Tyr-255.

Belongs to the Lgt family.

It is found in the cell membrane. The catalysed reaction is L-cysteinyl-[prolipoprotein] + a 1,2-diacyl-sn-glycero-3-phospho-(1'-sn-glycerol) = an S-1,2-diacyl-sn-glyceryl-L-cysteinyl-[prolipoprotein] + sn-glycerol 1-phosphate + H(+). The protein operates within protein modification; lipoprotein biosynthesis (diacylglyceryl transfer). In terms of biological role, catalyzes the transfer of the diacylglyceryl group from phosphatidylglycerol to the sulfhydryl group of the N-terminal cysteine of a prolipoprotein, the first step in the formation of mature lipoproteins. The protein is Phosphatidylglycerol--prolipoprotein diacylglyceryl transferase of Staphylococcus carnosus (strain TM300).